The sequence spans 460 residues: MHQIYSATSTDKKLPEVVDLFSGCGGLALGFQLAGFNIRKGIELDRDASDVASFNLHWRQGKHDRHLNNDITLLSANEFYNDLDRKNDLIVIGGPPCQAYSKIGRAKLKSLGEERRQENDARGKLYENFLDYALHVDANVIVMENVPEAVNYGGVNIPDTVCDILINKGYDAIWTVLNAADFGVPQTRVRLFVMAIKKDIGKIKFIPEPTHKPHINVKRQSVNVRWMQSEIRNSKYYKQPNIPDETLSDWVTVGDAIGDLPNLFPVYNQKYKNYKPMMMKEYKSPPQNTFQKLMRINNKVDKVTGNMFRNTKRDFSIFDKMEEGDNYLDAHNIAMSLLRKEMRKSGITKENEFEYRLLKDRIVPPYSTEKFVEKWRKLSSDKPSHTLVAHLSTDTYSHLHPREPRGISVREAARLQSFPDDFLFDCSMGAAFKQIGNAVPPLLAKAIAEAMKKNIQGGCI.

The SAM-dependent MTase C5-type domain maps to 15-458; it reads PEVVDLFSGC…EAMKKNIQGG (444 aa). Cysteine 97 is an active-site residue.

This sequence belongs to the class I-like SAM-binding methyltransferase superfamily. C5-methyltransferase family.

It carries out the reaction a 2'-deoxycytidine in DNA + S-adenosyl-L-methionine = a 5-methyl-2'-deoxycytidine in DNA + S-adenosyl-L-homocysteine + H(+). Its function is as follows. A methylase, recognizes the double-stranded sequence 5'-ACCGGT-3', methylates C-? on both strands. No endonuclease has been identified for this methylase. This chain is Putative type II methyltransferase M.OihORF3336P, found in Oceanobacillus iheyensis (strain DSM 14371 / CIP 107618 / JCM 11309 / KCTC 3954 / HTE831).